We begin with the raw amino-acid sequence, 97 residues long: Co-chaperonin GroES (97 aa).

It belongs to the GroES chaperonin family. In terms of assembly, heptamer of 7 subunits arranged in a ring. Interacts with the chaperonin GroEL.

It localises to the cytoplasm. In terms of biological role, together with the chaperonin GroEL, plays an essential role in assisting protein folding. The GroEL-GroES system forms a nano-cage that allows encapsulation of the non-native substrate proteins and provides a physical environment optimized to promote and accelerate protein folding. GroES binds to the apical surface of the GroEL ring, thereby capping the opening of the GroEL channel. The sequence is that of Co-chaperonin GroES from Serratia proteamaculans (strain 568).